Reading from the N-terminus, the 87-residue chain is Small ribosomal subunit protein uS15c (87 aa).

It belongs to the universal ribosomal protein uS15 family. In terms of assembly, part of the 30S ribosomal subunit.

It is found in the plastid. The protein localises to the chloroplast. This is Small ribosomal subunit protein uS15c (rps15) from Nicotiana tabacum (Common tobacco).